Here is a 4639-residue protein sequence, read N- to C-terminus: Dynein heavy chain, cytoplasmic (4639 aa).

The interval Met1–Phe1856 is stem. Coiled coils occupy residues Leu530–Gln565, Ser774–Ser794, and Asp1264–Arg1368. AAA regions lie at residues Tyr1857–Ser2084, Glu2166–Leu2437, Glu2541–Gly2790, and Val2884–Thr3153. ATP-binding positions include Gly1895–Thr1902, Gly2210–Ser2217, Gly2580–Thr2587, and Gly2922–Thr2929. Coiled coils occupy residues Gly3189 to Lys3261, Ala3382 to Thr3478, and Glu3723 to Thr3782. The segment at Gly3189–Thr3478 is stalk. AAA stretches follow at residues Leu3539–Gln3768 and Ala3989–Thr4205.

It belongs to the dynein heavy chain family. As to quaternary structure, consists of at least two heavy chains and a number of intermediate and light chains.

It localises to the cytoplasm. It is found in the cytoskeleton. Its function is as follows. Cytoplasmic dynein acts as a motor for the intracellular retrograde motility of vesicles and organelles along microtubules. Dynein has ATPase activity; the force-producing power stroke is thought to occur on release of ADP. This is Dynein heavy chain, cytoplasmic (Dhc64C) from Drosophila melanogaster (Fruit fly).